A 614-amino-acid chain; its full sequence is UDP-sugar pyrophosphorylase (614 aa).

At Ala-2 the chain carries N-acetylalanine.

Belongs to the USP family. The cofactor is Mg(2+). Requires Mn(2+) as cofactor. As to expression, ubiquitous, but most abundant in rosette leaves, inflorescences, stems, stamens and pollen.

It carries out the reaction a monosaccharide 1-phosphate + UTP + H(+) = a UDP-monosaccharide + diphosphate. Functionally, required for the synthesis of the intine, the pectocellulosic inner wall of developing pollen. May function as the terminal enzyme of the myo-inositol oxidation (MIO) pathway. May also play a role in the salvage pathway for synthesis of nucleotide sugars. Can use a wide range of substrates including glucose-1-phosphate, galactose-1-phosphate, xylose-1-phosphate, arabinose-1-phosphate and glucuronate-1-phosphate. The polypeptide is UDP-sugar pyrophosphorylase (USP) (Arabidopsis thaliana (Mouse-ear cress)).